The primary structure comprises 636 residues: Biosynthetic arginine decarboxylase (636 aa).

K101 bears the N6-(pyridoxal phosphate)lysine mark. 286-296 lines the substrate pocket; sequence FDVGGGLAVDY.

It belongs to the Orn/Lys/Arg decarboxylase class-II family. SpeA subfamily. It depends on Mg(2+) as a cofactor. Pyridoxal 5'-phosphate serves as cofactor.

The enzyme catalyses L-arginine + H(+) = agmatine + CO2. Its pathway is amine and polyamine biosynthesis; agmatine biosynthesis; agmatine from L-arginine: step 1/1. Functionally, catalyzes the biosynthesis of agmatine from arginine. This Shewanella denitrificans (strain OS217 / ATCC BAA-1090 / DSM 15013) protein is Biosynthetic arginine decarboxylase.